Reading from the N-terminus, the 702-residue chain is MEIRGLITRLLGPCHLRHLILCSLGLYSILVQSVHCRHHDIGSSVAHQLGSKYSQSSSLSSSSQSSSSLAEEATLNKDSDAFFTPYIGHGDSVRIVDAELGTLEREHIHSTTTRRRGLTRRESSSDATDSDPLVITTDKGKIRGTTLEAPSGKKVDAWMGIPYAQPPLGPLRFRHPRPAERWTGVLNATKPPNSCVQIVDTVFGDFPGATMWNPNTPLSEDCLYINVVVPRPRPKNAAVMLWIFGGGFYSGTATLDVYDHRTLASEENVIVVSLQYRVASLGFLFLGTPEAPGNAGLFDQNLALRWVRDNIHRFGGDPSRVTLFGESAGAVSVSLHLLSALSRDLFQRAILQSGSPTAPWALVSREEATLRALRLAEAVNCPHDATKLSDAVECLRTKDPNELVDNEWGTLGICEFPFVPVVDGAFLDETPQRSLASGRFKKTDILTGSNTEEGYYFIIYYLTELLRKEEGVTVTREEFLQAVRELNPYVNGAARQAIVFEYTDWIEPDNPNSNRDALDKMVGDYHFTCNVNEFAQRYAEEGNNVFMYLYTHRSKGNPWPRWTGVMHGDEINYVFGEPLNSALGYQDDEKDFSRKIMRYWSNFAKTGNPNPSTPSVDLPEWPKHTAHGRHYLELGLNTTFVGRGPRLRQCAFWKKYLPQLVAATSNLQVTPAPSVPCESSSTSYRSTLLLIVTLLLVTRFKI.

Positions 1–36 (MEIRGLITRLLGPCHLRHLILCSLGLYSILVQSVHC) are cleaved as a signal peptide. The interval 107–134 (HIHSTTTRRRGLTRRESSSDATDSDPLV) is disordered. N-linked (GlcNAc...) asparagine glycosylation is present at Asn187. A disulfide bridge links Cys195 with Cys222. Catalysis depends on Ser327, which acts as the Acyl-ester intermediate. Cys381 and Cys394 are joined by a disulfide. Catalysis depends on charge relay system residues Glu453 and His567. Residues Cys529 and Cys650 are joined by a disulfide bond. Asn637 carries an N-linked (GlcNAc...) asparagine glycan.

It belongs to the type-B carboxylesterase/lipase family.

It is found in the synapse. The protein resides in the secreted. It localises to the cell membrane. It catalyses the reaction acetylcholine + H2O = choline + acetate + H(+). Its function is as follows. Rapidly hydrolyzes choline released into the synapse. The protein is Acetylcholinesterase (ACHE1) of Culex pipiens (House mosquito).